A 448-amino-acid polypeptide reads, in one-letter code: N-succinylarginine dihydrolase (448 aa).

Residues G19–S28, N110, and H137–R138 each bind substrate. The active site involves E174. Residue R214 coordinates substrate. H250 is a catalytic residue. Substrate contacts are provided by D252 and N365. C371 acts as the Nucleophile in catalysis.

Belongs to the succinylarginine dihydrolase family. In terms of assembly, homodimer.

It carries out the reaction N(2)-succinyl-L-arginine + 2 H2O + 2 H(+) = N(2)-succinyl-L-ornithine + 2 NH4(+) + CO2. Its pathway is amino-acid degradation; L-arginine degradation via AST pathway; L-glutamate and succinate from L-arginine: step 2/5. In terms of biological role, catalyzes the hydrolysis of N(2)-succinylarginine into N(2)-succinylornithine, ammonia and CO(2). This chain is N-succinylarginine dihydrolase, found in Pseudomonas fluorescens (strain Pf0-1).